Reading from the N-terminus, the 29-residue chain is Frontoxin VI (29 aa).

Cysteine 3 and cysteine 24 are joined by a disulfide.

Expressed by the venom gland.

It localises to the secreted. In terms of biological role, binds to muscle nicotinic acetylcholine receptor (nAChR) and inhibit acetylcholine from binding to the receptor, thereby impairing neuromuscular transmission. This Micrurus frontalis (Coral snake) protein is Frontoxin VI.